A 156-amino-acid chain; its full sequence is Cyclic pyranopterin monophosphate synthase (156 aa).

Substrate-binding positions include 75–77 and 111–112; these read LCH and ME. Residue aspartate 126 is part of the active site.

The protein belongs to the MoaC family. In terms of assembly, homohexamer; trimer of dimers.

It catalyses the reaction (8S)-3',8-cyclo-7,8-dihydroguanosine 5'-triphosphate = cyclic pyranopterin phosphate + diphosphate. The protein operates within cofactor biosynthesis; molybdopterin biosynthesis. Its function is as follows. Catalyzes the conversion of (8S)-3',8-cyclo-7,8-dihydroguanosine 5'-triphosphate to cyclic pyranopterin monophosphate (cPMP). The chain is Cyclic pyranopterin monophosphate synthase from Erythrobacter litoralis (strain HTCC2594).